Here is a 512-residue protein sequence, read N- to C-terminus: V-type proton ATPase subunit B (512 aa).

R381 serves as a coordination point for ATP. A disordered region spans residues 484–512 (LYGRDREQDDDEDEDEEDPDKSGDKLIDA). The segment covering 491 to 502 (QDDDEDEDEEDP) has biased composition (acidic residues). Basic and acidic residues predominate over residues 503-512 (DKSGDKLIDA).

This sequence belongs to the ATPase alpha/beta chains family. As to quaternary structure, V-ATPase is a heteromultimeric enzyme composed of a peripheral catalytic V1 complex (components A to H) attached to an integral membrane V0 proton pore complex (components: a, c, c', c'', d, e, f and VOA1).

The protein resides in the vacuole membrane. In terms of biological role, non-catalytic subunit of the V1 complex of vacuolar(H+)-ATPase (V-ATPase), a multisubunit enzyme composed of a peripheral complex (V1) that hydrolyzes ATP and a membrane integral complex (V0) that translocates protons. Plays an important role in resistance to several stresses, as well as in autophagy and virulence. In Candida albicans (strain SC5314 / ATCC MYA-2876) (Yeast), this protein is V-type proton ATPase subunit B.